The chain runs to 535 residues: Bifunctional purine biosynthesis protein PurH (535 aa).

The MGS-like domain occupies 6–151; that stretch reads TRLPVRRALI…KNHKDVAIVV (146 aa).

The protein belongs to the PurH family.

The enzyme catalyses (6R)-10-formyltetrahydrofolate + 5-amino-1-(5-phospho-beta-D-ribosyl)imidazole-4-carboxamide = 5-formamido-1-(5-phospho-D-ribosyl)imidazole-4-carboxamide + (6S)-5,6,7,8-tetrahydrofolate. The catalysed reaction is IMP + H2O = 5-formamido-1-(5-phospho-D-ribosyl)imidazole-4-carboxamide. Its pathway is purine metabolism; IMP biosynthesis via de novo pathway; 5-formamido-1-(5-phospho-D-ribosyl)imidazole-4-carboxamide from 5-amino-1-(5-phospho-D-ribosyl)imidazole-4-carboxamide (10-formyl THF route): step 1/1. It participates in purine metabolism; IMP biosynthesis via de novo pathway; IMP from 5-formamido-1-(5-phospho-D-ribosyl)imidazole-4-carboxamide: step 1/1. The chain is Bifunctional purine biosynthesis protein PurH from Pseudomonas putida (strain GB-1).